A 288-amino-acid chain; its full sequence is ATP synthase gamma chain (288 aa).

This sequence belongs to the ATPase gamma chain family. F-type ATPases have 2 components, CF(1) - the catalytic core - and CF(0) - the membrane proton channel. CF(1) has five subunits: alpha(3), beta(3), gamma(1), delta(1), epsilon(1). CF(0) has three main subunits: a, b and c.

It localises to the cell inner membrane. Produces ATP from ADP in the presence of a proton gradient across the membrane. The gamma chain is believed to be important in regulating ATPase activity and the flow of protons through the CF(0) complex. In Legionella pneumophila (strain Corby), this protein is ATP synthase gamma chain.